The chain runs to 85 residues: Small ribosomal subunit protein uS17 (85 aa).

This sequence belongs to the universal ribosomal protein uS17 family. As to quaternary structure, part of the 30S ribosomal subunit.

In terms of biological role, one of the primary rRNA binding proteins, it binds specifically to the 5'-end of 16S ribosomal RNA. The protein is Small ribosomal subunit protein uS17 of Mycoplasmoides gallisepticum (strain R(low / passage 15 / clone 2)) (Mycoplasma gallisepticum).